The sequence spans 288 residues: UTP--glucose-1-phosphate uridylyltransferase (288 aa).

It belongs to the UDPGP type 2 family.

The catalysed reaction is alpha-D-glucose 1-phosphate + UTP + H(+) = UDP-alpha-D-glucose + diphosphate. Its pathway is glycolipid metabolism; diglucosyl-diacylglycerol biosynthesis. Functionally, catalyzes the formation of UDP-glucose from glucose-1-phosphate and UTP. This is an intermediate step in the biosynthesis of diglucosyl-diacylglycerol (Glc2-DAG), i.e. the predominant glycolipid found in the S.aureus membrane, which is also used as a membrane anchor for lipoteichoic acid (LTA). The polypeptide is UTP--glucose-1-phosphate uridylyltransferase (gtaB) (Staphylococcus aureus (strain MRSA252)).